Consider the following 389-residue polypeptide: Chalcone synthase 1A (389 aa).

Residue Cys164 is part of the active site.

It belongs to the thiolase-like superfamily. Chalcone/stilbene synthases family.

The catalysed reaction is (E)-4-coumaroyl-CoA + 3 malonyl-CoA + 3 H(+) = 2',4,4',6'-tetrahydroxychalcone + 3 CO2 + 4 CoA. It functions in the pathway secondary metabolite biosynthesis; flavonoid biosynthesis. Functionally, the primary product of this enzyme is 4,2',4',6'-tetrahydroxychalcone (also termed naringenin-chalcone or chalcone) which can under specific conditions spontaneously isomerize into naringenin. The chain is Chalcone synthase 1A (CHS-1A) from Pisum sativum (Garden pea).